We begin with the raw amino-acid sequence, 268 residues long: Undecaprenyl-diphosphatase (268 aa).

Helical transmembrane passes span 41-61 (LAYS…LIYF), 81-101 (WLTY…PLYM), 106-126 (YLLL…AVIF), 146-166 (MTLG…LPGI), 191-211 (FVLV…SEGG), 213-233 (VATP…LVTI), and 245-265 (VTLV…TRIL).

It belongs to the UppP family.

It localises to the cell membrane. It catalyses the reaction di-trans,octa-cis-undecaprenyl diphosphate + H2O = di-trans,octa-cis-undecaprenyl phosphate + phosphate + H(+). Catalyzes the dephosphorylation of undecaprenyl diphosphate (UPP). This is Undecaprenyl-diphosphatase from Pyrobaculum islandicum (strain DSM 4184 / JCM 9189 / GEO3).